A 576-amino-acid polypeptide reads, in one-letter code: 9-cis-epoxycarotenoid dioxygenase NCED2, chloroplastic (576 aa).

The N-terminal 34 residues, 1–34 (MEVPIAAMTFAHPANVMTLASRQPKSKRSHISPA), are a transit peptide targeting the chloroplast. Residues His270, His319, His385, and His563 each contribute to the Fe cation site.

It belongs to the carotenoid oxygenase family. Fe(2+) serves as cofactor.

It is found in the plastid. The protein localises to the chloroplast. It carries out the reaction a 9-cis-epoxycarotenoid + O2 = a 12'-apo-carotenal + 2-cis,4-trans-xanthoxin. It catalyses the reaction 9-cis-violaxanthin + O2 = (3S,5R,6S)-5,6-epoxy-3-hydroxy-5,6-dihydro-12'-apo-beta-caroten-12'-al + 2-cis,4-trans-xanthoxin. The catalysed reaction is 9'-cis-neoxanthin + O2 = (3S,5R,6R)-3,5-dihydroxy-6,7-didehydro-5,6-dihydro-12'-apo-beta-caroten-12'-al + 2-cis,4-trans-xanthoxin. Has a 11,12(11',12') 9-cis epoxycarotenoid cleavage activity. Catalyzes the first step of abscisic-acid biosynthesis from carotenoids. This chain is 9-cis-epoxycarotenoid dioxygenase NCED2, chloroplastic, found in Oryza sativa subsp. japonica (Rice).